We begin with the raw amino-acid sequence, 576 residues long: Aspartate--tRNA ligase (576 aa).

Glu-170 lines the L-aspartate pocket. The segment at 194–197 (QLFK) is aspartate. Arg-216 is an L-aspartate binding site. ATP contacts are provided by residues 216–218 (RDE) and Gln-225. His-438 lines the L-aspartate pocket. Glu-471 lines the ATP pocket. Arg-478 contributes to the L-aspartate binding site. 523 to 526 (GLDR) serves as a coordination point for ATP.

It belongs to the class-II aminoacyl-tRNA synthetase family. Type 1 subfamily. In terms of assembly, homodimer.

It is found in the cytoplasm. The catalysed reaction is tRNA(Asp) + L-aspartate + ATP = L-aspartyl-tRNA(Asp) + AMP + diphosphate. Its function is as follows. Catalyzes the attachment of L-aspartate to tRNA(Asp) in a two-step reaction: L-aspartate is first activated by ATP to form Asp-AMP and then transferred to the acceptor end of tRNA(Asp). In Fervidobacterium nodosum (strain ATCC 35602 / DSM 5306 / Rt17-B1), this protein is Aspartate--tRNA ligase.